Reading from the N-terminus, the 734-residue chain is Photosystem I P700 chlorophyll a apoprotein A2 (734 aa).

8 helical membrane passes run 46–69 (IFASHFGQLAIIFLWTSGNLFHVA), 135–158 (LYTGALFLLFISAISLIAGWLHLQ), 175–199 (LNHHLSGLFGVSSLAWTGHLVHVAI), 273–291 (MAHHHLAIAFIFLIAGHMY), 330–353 (IHFQLGLALASLGVITSLVAQHMY), 369–395 (AALYTHHQYIAGFIMTGAFAHGAIFFI), 417–439 (AIISHLSWASLFLGFHTLGLYVH), and 517–535 (FLVHHAIALGLHTTTLILV). The [4Fe-4S] cluster site is built by Cys559 and Cys568. The next 2 membrane-spanning stretches (helical) occupy residues 575-596 (AFYLAVFWMLNTIGWVTFYWHW) and 643-665 (LSVWAWMFLFGHLVWATGFMFLI). The chlorophyll a site is built by His654, Met662, and Tyr670. Trp671 provides a ligand contact to phylloquinone. A helical membrane pass occupies residues 707–727 (LVGLAHFSVGYIFTYAAFLIA).

This sequence belongs to the PsaA/PsaB family. In terms of assembly, the PsaA/B heterodimer binds the P700 chlorophyll special pair and subsequent electron acceptors. PSI consists of a core antenna complex that captures photons, and an electron transfer chain that converts photonic excitation into a charge separation. The eukaryotic PSI reaction center is composed of at least 11 subunits. Requires P700 is a chlorophyll a/chlorophyll a' dimer, A0 is one or more chlorophyll a, A1 is one or both phylloquinones and FX is a shared 4Fe-4S iron-sulfur center. as cofactor.

The protein resides in the plastid. It localises to the chloroplast thylakoid membrane. The catalysed reaction is reduced [plastocyanin] + hnu + oxidized [2Fe-2S]-[ferredoxin] = oxidized [plastocyanin] + reduced [2Fe-2S]-[ferredoxin]. Functionally, psaA and PsaB bind P700, the primary electron donor of photosystem I (PSI), as well as the electron acceptors A0, A1 and FX. PSI is a plastocyanin-ferredoxin oxidoreductase, converting photonic excitation into a charge separation, which transfers an electron from the donor P700 chlorophyll pair to the spectroscopically characterized acceptors A0, A1, FX, FA and FB in turn. Oxidized P700 is reduced on the lumenal side of the thylakoid membrane by plastocyanin. In Helianthus annuus (Common sunflower), this protein is Photosystem I P700 chlorophyll a apoprotein A2.